A 185-amino-acid chain; its full sequence is Ribosome-recycling factor (185 aa).

It belongs to the RRF family.

The protein localises to the cytoplasm. In terms of biological role, responsible for the release of ribosomes from messenger RNA at the termination of protein biosynthesis. May increase the efficiency of translation by recycling ribosomes from one round of translation to another. The protein is Ribosome-recycling factor of Thermosipho melanesiensis (strain DSM 12029 / CIP 104789 / BI429).